Reading from the N-terminus, the 444-residue chain is C4-dicarboxylate transport protein 3 (444 aa).

A run of 9 helical transmembrane segments spans residues 22–42 (VLYVQVLIAIVLGAIVGWLWP), 60–80 (LIKMVIAPIIFCTVVSGIAHI), 95–115 (VYFEVVSTFALVIGLIIGNLV), 162–182 (GEILQVLLFSVLFGFAIMSLG), 198–218 (AVFGVISIVMRAAPIGAFGAM), 236–256 (LIATFYVTAALFVFVVLGIIA), 321–341 (IYMTLATLFIAQALGFDLSFG), 346–366 (ILVVAMLTSKGASGITGAGFI), and 399–419 (LTNLCGNGVACVIVAWWEGEL).

This sequence belongs to the dicarboxylate/amino acid:cation symporter (DAACS) (TC 2.A.23) family.

It is found in the cell inner membrane. Responsible for the transport of dicarboxylates such as succinate, fumarate, and malate from the periplasm across the membrane. The protein is C4-dicarboxylate transport protein 3 of Bradyrhizobium diazoefficiens (strain JCM 10833 / BCRC 13528 / IAM 13628 / NBRC 14792 / USDA 110).